Here is a 240-residue protein sequence, read N- to C-terminus: Large ribosomal subunit protein uL2 (240 aa).

A compositionally biased stretch (polar residues) spans 1–11 (MGKRLISQNRG). 2 disordered regions span residues 1–28 (MGKR…KGAV) and 206–240 (GGGR…TGRK). Composition is skewed to basic residues over residues 13 to 28 (GTPK…KGAV) and 224 to 240 (SPGR…TGRK).

Belongs to the universal ribosomal protein uL2 family. In terms of assembly, part of the 50S ribosomal subunit. Forms a bridge to the 30S subunit in the 70S ribosome.

In terms of biological role, one of the primary rRNA binding proteins. Required for association of the 30S and 50S subunits to form the 70S ribosome, for tRNA binding and peptide bond formation. It has been suggested to have peptidyltransferase activity; this is somewhat controversial. Makes several contacts with the 16S rRNA in the 70S ribosome. The protein is Large ribosomal subunit protein uL2 of Methanococcus maripaludis (strain C7 / ATCC BAA-1331).